A 1489-amino-acid chain; its full sequence is DNA-directed RNA polymerase subunit beta (1489 aa).

This sequence belongs to the RNA polymerase beta chain family. In terms of assembly, the RNAP catalytic core consists of 2 alpha, 1 beta, 1 beta' and 1 omega subunit. When a sigma factor is associated with the core the holoenzyme is formed, which can initiate transcription.

The catalysed reaction is RNA(n) + a ribonucleoside 5'-triphosphate = RNA(n+1) + diphosphate. Its function is as follows. DNA-dependent RNA polymerase catalyzes the transcription of DNA into RNA using the four ribonucleoside triphosphates as substrates. This chain is DNA-directed RNA polymerase subunit beta, found in Koribacter versatilis (strain Ellin345).